A 61-amino-acid chain; its full sequence is MAVPKQKSSKSRGRKRRTHQKVAAPTLTVCPECQEAKLPHAACPACGAYRNRNVRPDAVEA.

A disordered region spans residues 1 to 22 (MAVPKQKSSKSRGRKRRTHQKV). A compositionally biased stretch (basic residues) spans 7–20 (KSSKSRGRKRRTHQ).

It belongs to the bacterial ribosomal protein bL32 family.

The polypeptide is Large ribosomal subunit protein bL32 (Desulforapulum autotrophicum (strain ATCC 43914 / DSM 3382 / VKM B-1955 / HRM2) (Desulfobacterium autotrophicum)).